Here is a 658-residue protein sequence, read N- to C-terminus: Heat shock protein homolog SSE1 (658 aa).

Positions 614-627 are enriched in basic and acidic residues; sequence KRKEEERKSKKENA. Positions 614-658 are disordered; the sequence is KRKEEERKSKKENAQEGTSSKPESKEESEAKEDNDEESDVASIDE. Residues 642–658 show a composition bias toward acidic residues; it reads EAKEDNDEESDVASIDE.

It belongs to the heat shock protein 70 family.

It localises to the cytoplasm. Functionally, required for normal growth at various temperatures. In Encephalitozoon cuniculi (strain GB-M1) (Microsporidian parasite), this protein is Heat shock protein homolog SSE1 (SSE1).